Consider the following 254-residue polypeptide: Short-chain dehydrogenase/reductase SDRA (254 aa).

15–39 (IVTASTQGIGFGITERFGLEGASVV) is an NADP(+) binding site. S146 contributes to the substrate binding site. Residue Y159 is the Proton acceptor of the active site. Positions 252-254 (SRL) match the Microbody targeting signal motif.

The protein belongs to the short-chain dehydrogenases/reductases (SDR) family.

The protein localises to the peroxisome. Its function is as follows. Involved with IBR3 and IBR10 in the peroxisomal beta-oxidation of indole-3-butyric acid (IBA) to form indole-3-acetic acid (IAA), a biologically active auxin. May be responsible for catalyzing the dehydrogenation step in the conversion of IBA. May be involved in the peroxisomal activation of 2,4-dichlorophenoxybutyric acid (2,4-DB), a precursor of active auxins that inhibit root growth. The polypeptide is Short-chain dehydrogenase/reductase SDRA (Arabidopsis thaliana (Mouse-ear cress)).